The primary structure comprises 369 residues: MWIKELNLTHYRNYQQASAAFSPGLNVFIGDNAQGKTNFLEAIYFLSVTRSHRTKSDKDLIYFDERDCSISGTLERLSGRVQLEILLSDKGRITKINTLKQAKLSDYIGAMMVVLFAPEDLQLVKGSPSLRRKFMDIDLGQIKPVYLSDLSHYNHVLKQRNAYLKSVHQLDSDFLSVLDEQLVTYGSRVMAHRLAFVQSLAKEANKHHQAISNGLEKLSISYQASVSFEHQQEIYQQFMDQLKTTHQRDFLRKNTGVGPHRDDLIFYINGMNANFASQGQHRSLILSLKMAEVSLMKQLTGDNPILLLDDVMSELDNIRQTKLLEAVKKENVQTFITTTSLKHLSQLPKDISLFKVNKGTIALDSVMID.

30–37 is a binding site for ATP; it reads GDNAQGKT.

Belongs to the RecF family.

The protein resides in the cytoplasm. Functionally, the RecF protein is involved in DNA metabolism; it is required for DNA replication and normal SOS inducibility. RecF binds preferentially to single-stranded, linear DNA. It also seems to bind ATP. This Streptococcus equi subsp. zooepidemicus (strain MGCS10565) protein is DNA replication and repair protein RecF.